Here is a 340-residue protein sequence, read N- to C-terminus: Ferrochelatase (340 aa).

Fe cation is bound by residues H189 and E292.

It belongs to the ferrochelatase family.

The protein resides in the cytoplasm. It catalyses the reaction heme b + 2 H(+) = protoporphyrin IX + Fe(2+). The protein operates within porphyrin-containing compound metabolism; protoheme biosynthesis; protoheme from protoporphyrin-IX: step 1/1. Its function is as follows. Catalyzes the ferrous insertion into protoporphyrin IX. The protein is Ferrochelatase of Pseudomonas aeruginosa (strain LESB58).